Consider the following 456-residue polypeptide: Bifunctional protein GlmU (456 aa).

Residues 1–228 (MPQNTLNIVI…SHLAAGVNNK (228 aa)) are pyrophosphorylase. UDP-N-acetyl-alpha-D-glucosamine is bound by residues 11–14 (LAAG), lysine 25, glutamine 75, 80–81 (GT), 102–104 (YGD), glycine 138, glutamate 153, asparagine 168, and asparagine 226. Position 104 (aspartate 104) interacts with Mg(2+). A Mg(2+)-binding site is contributed by asparagine 226. Residues 229–249 (LQLAELERIFQTGQAQELLKA) form a linker region. Residues 250–456 (GVTLHDPARF…GWVRPEKDKQ (207 aa)) are N-acetyltransferase. The UDP-N-acetyl-alpha-D-glucosamine site is built by arginine 332 and lysine 350. Histidine 362 (proton acceptor) is an active-site residue. Residues tyrosine 365 and asparagine 376 each contribute to the UDP-N-acetyl-alpha-D-glucosamine site. Residues alanine 379, 385–386 (NY), serine 404, alanine 422, and arginine 439 contribute to the acetyl-CoA site.

It in the N-terminal section; belongs to the N-acetylglucosamine-1-phosphate uridyltransferase family. This sequence in the C-terminal section; belongs to the transferase hexapeptide repeat family. As to quaternary structure, homotrimer. Mg(2+) serves as cofactor.

The protein localises to the cytoplasm. The enzyme catalyses alpha-D-glucosamine 1-phosphate + acetyl-CoA = N-acetyl-alpha-D-glucosamine 1-phosphate + CoA + H(+). The catalysed reaction is N-acetyl-alpha-D-glucosamine 1-phosphate + UTP + H(+) = UDP-N-acetyl-alpha-D-glucosamine + diphosphate. It participates in nucleotide-sugar biosynthesis; UDP-N-acetyl-alpha-D-glucosamine biosynthesis; N-acetyl-alpha-D-glucosamine 1-phosphate from alpha-D-glucosamine 6-phosphate (route II): step 2/2. Its pathway is nucleotide-sugar biosynthesis; UDP-N-acetyl-alpha-D-glucosamine biosynthesis; UDP-N-acetyl-alpha-D-glucosamine from N-acetyl-alpha-D-glucosamine 1-phosphate: step 1/1. The protein operates within bacterial outer membrane biogenesis; LPS lipid A biosynthesis. Functionally, catalyzes the last two sequential reactions in the de novo biosynthetic pathway for UDP-N-acetylglucosamine (UDP-GlcNAc). The C-terminal domain catalyzes the transfer of acetyl group from acetyl coenzyme A to glucosamine-1-phosphate (GlcN-1-P) to produce N-acetylglucosamine-1-phosphate (GlcNAc-1-P), which is converted into UDP-GlcNAc by the transfer of uridine 5-monophosphate (from uridine 5-triphosphate), a reaction catalyzed by the N-terminal domain. This Neisseria meningitidis serogroup C (strain 053442) protein is Bifunctional protein GlmU.